Here is a 231-residue protein sequence, read N- to C-terminus: Acyl-protein thioesterase 2 (231 aa).

Residue Cys2 is the site of S-palmitoyl cysteine attachment. At Ser82 the chain carries Phosphoserine. Catalysis depends on charge relay system residues Ser122, Asp176, and His210.

Belongs to the AB hydrolase superfamily. AB hydrolase 2 family. In terms of tissue distribution, expressed in various breast cancer cell lines.

It is found in the cytoplasm. It carries out the reaction S-hexadecanoyl-L-cysteinyl-[protein] + H2O = L-cysteinyl-[protein] + hexadecanoate + H(+). It catalyses the reaction prostaglandin E2 1-glyceryl ester + H2O = prostaglandin E2 + glycerol + H(+). The catalysed reaction is 1-hexadecanoyl-sn-glycero-3-phosphocholine + H2O = sn-glycerol 3-phosphocholine + hexadecanoate + H(+). The enzyme catalyses 1-octadecanoyl-sn-glycero-3-phosphocholine + H2O = octadecanoate + sn-glycerol 3-phosphocholine + H(+). It carries out the reaction 1-hexadecanoyl-sn-glycero-3-phosphate + H2O = sn-glycerol 3-phosphate + hexadecanoate + H(+). It catalyses the reaction 1-hexadecanoyl-sn-glycero-3-phospho-L-serine + H2O = sn-glycero-3-phospho-L-serine + hexadecanoate + H(+). Inhibited by compound 1 or (5,5-Dioxido-4H-thieno[3,2-c]thiochromen-2-yl)(4-(4-methoxyphenyl)piperazin-1-yl)methanone. Functionally, acts as an acyl-protein thioesterase hydrolyzing fatty acids from S-acylated cysteine residues in proteins such as trimeric G alpha proteins, GSDMD, GAP43, ZDHHC6 or HRAS. Deacylates GAP43. Mediates depalmitoylation of ZDHHC6. Has lysophospholipase activity. Hydrolyzes prostaglandin glycerol esters (PG-Gs) in the following order prostaglandin D2-glycerol ester (PGD2-G) &gt; prostaglandin E2 glycerol ester (PGE2-G) &gt; prostaglandin F2-alpha-glycerol ester (PGF2-alpha-G). Hydrolyzes 1-arachidonoylglycerol but not 2-arachidonoylglycerol or arachidonoylethanolamide. This chain is Acyl-protein thioesterase 2 (LYPLA2), found in Homo sapiens (Human).